Here is a 295-residue protein sequence, read N- to C-terminus: Bifunctional protein FolD (295 aa).

NADP(+) is bound by residues 169 to 171 (GRS), Ser194, and Ile235.

This sequence belongs to the tetrahydrofolate dehydrogenase/cyclohydrolase family. In terms of assembly, homodimer.

It carries out the reaction (6R)-5,10-methylene-5,6,7,8-tetrahydrofolate + NADP(+) = (6R)-5,10-methenyltetrahydrofolate + NADPH. The catalysed reaction is (6R)-5,10-methenyltetrahydrofolate + H2O = (6R)-10-formyltetrahydrofolate + H(+). It participates in one-carbon metabolism; tetrahydrofolate interconversion. Its function is as follows. Catalyzes the oxidation of 5,10-methylenetetrahydrofolate to 5,10-methenyltetrahydrofolate and then the hydrolysis of 5,10-methenyltetrahydrofolate to 10-formyltetrahydrofolate. The sequence is that of Bifunctional protein FolD from Acaryochloris marina (strain MBIC 11017).